We begin with the raw amino-acid sequence, 300 residues long: Nucleotide-binding protein TM1040_2438 (300 aa).

24 to 31 is an ATP binding site; that stretch reads GPSGAGRT. 71–74 is a GTP binding site; the sequence is DPRN.

It belongs to the RapZ-like family.

Its function is as follows. Displays ATPase and GTPase activities. The sequence is that of Nucleotide-binding protein TM1040_2438 from Ruegeria sp. (strain TM1040) (Silicibacter sp.).